An 820-amino-acid chain; its full sequence is Sodium/hydrogen exchanger 1 (820 aa).

Residues 1 to 102 (MMLRWSGIWG…FPVLDIDYLH (102 aa)) lie on the Extracellular side of the membrane. Residues 44-71 (ASTIRGSEPPRERSIGDVTTAPSEPLHH) are disordered. The chain crosses the membrane as a helical span at residues 103 to 125 (VRTPFEISLWILLACLMKIGFHV). Over 126–134 (IPTISSIVP) the chain is Cytoplasmic. The chain crosses the membrane as a helical span at residues 135–152 (ESCLLIVVGLLVGGLIKG). Topologically, residues 153-162 (VGETPPFLQS) are extracellular. A helical transmembrane segment spans residues 163–180 (DVFFLFLLPPIILDAGYF). Residues 181-190 (LPLRQFTENL) are Cytoplasmic-facing. The helical transmembrane segment at 191–219 (GTILIFAVVGTLWNAFFLGGLLYAVCLVG) threads the bilayer. At 220 to 226 (GEQINNI) the chain is on the extracellular side. Residues 227-253 (GLLDTLLFGSIISAVDPVAVLAVFEEI) form a helical membrane-spanning segment. At 254-256 (HIN) the chain is on the cytoplasmic side. Residues 257 to 287 (ELLHILVFGESLLNDAVTVVLYHLFEEFASY) form a helical membrane-spanning segment. Residues 288–291 (EYVG) are Extracellular-facing. A helical membrane pass occupies residues 292–326 (ISDIFLGFLSFFVVSLGGVFVGVVYGVIAAFTSRF). The Cytoplasmic portion of the chain corresponds to 327–332 (TSHIRV). The chain crosses the membrane as a helical span at residues 333-345 (IEPLFVFLYSYMA). Topologically, residues 346–354 (YLSAELFHL) are extracellular. A helical membrane pass occupies residues 355–375 (SGIMALIASGVVMRPYVEANI). The Cytoplasmic segment spans residues 376–377 (SH). A helical transmembrane segment spans residues 378–408 (KSHTTIKYFLKMWSSVSETLIFIFLGVSTVA). The Extracellular portion of the chain corresponds to 409-414 (GSHQWN). A helical transmembrane segment spans residues 415-442 (WTFVISTLLFCLIARVLGVLVLTWFINK). Residues 443–448 (FRIVKL) lie on the Cytoplasmic side of the membrane. Residues 449 to 473 (TPKDQFIIAYGGLRGAIAFSLGYLL) traverse the membrane as a helical segment. The Extracellular portion of the chain corresponds to 474 to 479 (DKKHFP). The helical transmembrane segment at 480–509 (MCDLFLTAIITVIFFTVFVQGMTIRPLVDL) threads the bilayer. Residues 505 to 571 (PLVDLLAVKK…VKKCLIAGER (67 aa)) are interaction with TESC. The Cytoplasmic segment spans residues 510–820 (LAVKKKQETK…EGEPFIPKGQ (311 aa)). Residues 513 to 520 (KKKQETKR) are PI(4,5)P2-binding region. The interaction with CHP2 stretch occupies residues 519-549 (KRSINEEIHTQFLDHLLTGIEDICGHYGHHH). The interval 544-549 (HYGHHH) is confers pH-dependent PI(4,5)P2 binding. Positions 556–564 (RFNKKYVKK) are PI(4,5)P2-binding region. 2 positions are modified to phosphoserine: S603 and S606. Position 607 is a phosphothreonine (T607). S609 and S652 each carry phosphoserine. Residues 637-820 (KILRSNLQKT…EGEPFIPKGQ (184 aa)) are interaction with TESC. Residues 637-820 (KILRSNLQKT…EGEPFIPKGQ (184 aa)) are interaction with CALM1. Residues 688-691 (LTVP) form an interaction with PPP3CA region. Residues S697, S701, and S707 each carry the phosphoserine modification. The tract at residues 719-724 (PVITID) is interaction with PPP3CA. Phosphoserine is present on residues S727, S730, and S733. The interval 747 to 820 (GLKRGPRTTP…EGEPFIPKGQ (74 aa)) is disordered. T755 and T784 each carry phosphothreonine. Phosphoserine occurs at positions 790 and 801.

The protein belongs to the monovalent cation:proton antiporter 1 (CPA1) transporter (TC 2.A.36) family. In terms of assembly, homodimer; dimerization is crucial for its function. Oligomer. Interacts with CALM1 in a calcium-dependent manner. Interacts with TESC. Interacts (via residues 504-563) with CHP1. The interaction with CHP1 occurs at the plasma membrane in a calcium-dependent manner. Interacts with CHP2. The interaction with CHP2 occurs in a calcium-dependent manner. Interacts with EZR; regulates the cytoskeletal interactions of SLC9A1 and promotes stress fiber formation. Post-translationally, N-glycosylated and O-glycosylated in the N-terminal region. In terms of processing, ubiquitinated, leading to its degradation by the proteasome. Ubiquitination is reduced by CHP1. Palmitoylated; may play a major role in SLC9A1 regulation. Post-translationally, phosphorylation at Thr-784 increases SLC9A1 activity; specifically dephosphorylated by PPP3CA. Specifically dephosphorylated at Thr-784 by PPP3CA that negatively regulates SLC9A1 activity. Phosphorylation at Ser-652 by AKT1 reduces SLC9A1 binding to CALM1. In terms of tissue distribution, widely expressed.

The protein localises to the cell membrane. It localises to the basolateral cell membrane. The enzyme catalyses Na(+)(in) + H(+)(out) = Na(+)(out) + H(+)(in). It carries out the reaction Li(+)(out) + H(+)(in) = Li(+)(in) + H(+)(out). It catalyses the reaction Li(+)(in) + Na(+)(out) = Li(+)(out) + Na(+)(in). Activated at acidic pHs. Inhibited by cariporide and eniporide. Inhibited by amiloride and 5-amino-substituted derivatives. Phosphatidylinositol 4,5-bisphosphate (PI(4,5)P2) bind and activates SLC9A1 transporter activity. Electroneutral Na(+) /H(+) antiporter that extrudes Na(+) in exchange for external protons driven by the inward sodium ion chemical gradient, protecting cells from acidification that occurs from metabolism. Exchanges intracellular H(+) ions for extracellular Na(+) in 1:1 stoichiometry. Plays a key role in maintening intracellular pH neutral and cell volume, and thus is important for cell growth, proliferation, migration and survival. In addition, can transport lithium Li(+) and also functions as a Na(+)/Li(+) antiporter. SLC9A1 also functions in membrane anchoring and organization of scaffolding complexes that coordinate signaling inputs. This Rattus norvegicus (Rat) protein is Sodium/hydrogen exchanger 1 (Slc9a1).